Consider the following 338-residue polypeptide: Glutamate/glutamine/aspartate/asparagine-binding protein BztA (338 aa).

The signal sequence occupies residues 1–22; that stretch reads MKKSAFFGSVALAALVAGAASA.

Belongs to the bacterial solute-binding protein 3 family.

The protein localises to the periplasm. Functionally, part of a binding-protein-dependent transport system for glutamate, glutamine, aspartate and asparagine. The chain is Glutamate/glutamine/aspartate/asparagine-binding protein BztA (bztA) from Rhodobacter capsulatus (strain ATCC BAA-309 / NBRC 16581 / SB1003).